The sequence spans 974 residues: Villin-4 (974 aa).

Gelsolin-like repeat units lie at residues 29–79 (FIPT…DEAG), 150–190 (VHVK…QERA), 262–305 (GQAN…DDRK), 394–451 (LQVW…EERG), 532–572 (MQAI…TDQE), and 634–675 (LKVT…KNKL). A disordered region spans residues 738–783 (VKNGGTPVADKPKRRTPASYGGRASVPDKSQQRSRSMSFSPDRVRV). A phosphoserine mark is found at serine 777 and serine 787. 2 disordered regions span residues 801-833 (NARNLSTPPPVVRKLYPRSVTPDSSKFAPAPKS) and 845-930 (KIPP…PVSD). The span at 824 to 833 (SSKFAPAPKS) shows a compositional bias: low complexity. The segment covering 872–887 (NSKEQEEKKENDKEEG) has biased composition (basic and acidic residues). A compositionally biased stretch (polar residues) spans 888–898 (SMSSRIESLTI). Serine 890 is subject to Phosphoserine. The region spanning 909–974 (EEDLPAHPYD…NKFKMAVQLF (66 aa)) is the HP domain. The segment covering 912-921 (LPAHPYDRLK) has biased composition (basic and acidic residues).

Belongs to the villin/gelsolin family. Preferentially expressed in vegetative tissues. Detected in the whole seedling, hypocotyl, cotyledon, primary root, roots hair cells and trichomes. Expressed in flowers but not in the silique.

It is found in the cytoplasm. The protein localises to the cytoskeleton. Functionally, binds actin and actin filament bundles in a Ca(2+)-insensitive manner, but caps the barbed end of actin filaments and is able to sever them in a calcium-dependent manner. Involved in root hair growth through regulating actin organization in a Ca(2+)-dependent manner. The sequence is that of Villin-4 from Arabidopsis thaliana (Mouse-ear cress).